The following is a 214-amino-acid chain: Outer-membrane lipoprotein LolB (214 aa).

The first 25 residues, 1–25, serve as a signal peptide directing secretion; sequence MNNLKRFTKSIFSCIALSGLLFLGG. Cys-26 is lipidated: N-palmitoyl cysteine. Cys-26 carries the S-diacylglycerol cysteine lipid modification.

It belongs to the LolB family. Monomer.

Its subcellular location is the cell outer membrane. In terms of biological role, plays a critical role in the incorporation of lipoproteins in the outer membrane after they are released by the LolA protein. The sequence is that of Outer-membrane lipoprotein LolB from Shewanella oneidensis (strain ATCC 700550 / JCM 31522 / CIP 106686 / LMG 19005 / NCIMB 14063 / MR-1).